Here is a 289-residue protein sequence, read N- to C-terminus: 4-hydroxybenzoate octaprenyltransferase (289 aa).

The next 8 helical transmembrane spans lie at 21 to 40 (PIGTLLLLWPTLWALWLAAG), 95 to 115 (VLALFAVLALISFALVLTMNS), 116 to 136 (LTIALSFAALLLAVCYPFMKR), 138 to 158 (IPIPQLVLGMAFSWSIPMAYA), 161 to 181 (ANALPLVAWLVFLANLLWTIA), 213 to 233 (IIGVLQLATLLILLAVGQLMG), 236 to 256 (AWYYWGLLGAAALFVYQQRLI), and 268 to 288 (FLNNNYAGALVFIGLVLNYLL).

Belongs to the UbiA prenyltransferase family. The cofactor is Mg(2+).

Its subcellular location is the cell inner membrane. It catalyses the reaction all-trans-octaprenyl diphosphate + 4-hydroxybenzoate = 4-hydroxy-3-(all-trans-octaprenyl)benzoate + diphosphate. It functions in the pathway cofactor biosynthesis; ubiquinone biosynthesis. In terms of biological role, catalyzes the prenylation of para-hydroxybenzoate (PHB) with an all-trans polyprenyl group. Mediates the second step in the final reaction sequence of ubiquinone-8 (UQ-8) biosynthesis, which is the condensation of the polyisoprenoid side chain with PHB, generating the first membrane-bound Q intermediate 3-octaprenyl-4-hydroxybenzoate. The polypeptide is 4-hydroxybenzoate octaprenyltransferase (Aeromonas salmonicida (strain A449)).